The chain runs to 258 residues: Immediate-early protein IE-0 (258 aa).

The RING-type zinc finger occupies 191–237 (CNICEDSSAEEQFLKPNVCCGYRVCNACYAKLWEFCTGAYPVCPICK).

In Lymantria dispar multicapsid nuclear polyhedrosis virus (LdMNPV), this protein is Immediate-early protein IE-0 (IE-0).